A 322-amino-acid polypeptide reads, in one-letter code: 3-alpha-hydroxysteroid dehydrogenase (322 aa).

At M1 the chain carries Blocked amino end (Met). Residues 20–24 and D50 contribute to the NADP(+) site; that span reads GFGTT. Y55 (proton donor) is an active-site residue. H117 is a binding site for substrate. NADP(+)-binding positions include 166-167, Q190, and 216-221; these read SN and YCTLGS. W227 provides a ligand contact to substrate. An NADP(+)-binding site is contributed by 270 to 280; the sequence is RSFNAKRIKEL.

It belongs to the aldo/keto reductase family. Monomer. In terms of tissue distribution, in brain, highest levels found in olfactory bulb. Moderate levels present in cerebellum, cerebral cortex, hypothalamus and pituitary. Low levels present in amygdala, brain stem, caudate putamen, cingulate cortex, hippocampus, midbrain, and thalamus.

It localises to the cytoplasm. It catalyses the reaction a 3alpha-hydroxysteroid + NADP(+) = a 3-oxosteroid + NADPH + H(+). The enzyme catalyses a 3alpha-hydroxysteroid + NAD(+) = a 3-oxosteroid + NADH + H(+). With respect to regulation, potently inhibited by the nonsteroidal anti-inflammatory drugs (NSAID). Its function is as follows. Besides being a 3-alpha-hydroxysteroid dehydrogenase, the enzyme can accomplish diverse functions: as quinone reductase, as an aromatic alcohol dehydrogenase, as dihydrodiol dehydrogenase, and as 9-, 11-, and 15-hydroxyprostaglandin dehydrogenase. In Rattus norvegicus (Rat), this protein is 3-alpha-hydroxysteroid dehydrogenase (Akr1c9).